Consider the following 627-residue polypeptide: Phosphomethylpyrimidine synthase (627 aa).

Over residues 1–24 (MSATQKNNITRLEQLDRQSTQPFP) the composition is skewed to polar residues. The disordered stretch occupies residues 1–29 (MSATQKNNITRLEQLDRQSTQPFPNSRKV). Residues asparagine 231, methionine 260, tyrosine 289, histidine 325, 345–347 (SRG), 386–389 (DGLR), and glutamate 425 each bind substrate. Histidine 429 contributes to the Zn(2+) binding site. Tyrosine 452 provides a ligand contact to substrate. Histidine 493 provides a ligand contact to Zn(2+). Positions 573, 576, and 581 each coordinate [4Fe-4S] cluster.

This sequence belongs to the ThiC family. Homodimer. It depends on [4Fe-4S] cluster as a cofactor.

It catalyses the reaction 5-amino-1-(5-phospho-beta-D-ribosyl)imidazole + S-adenosyl-L-methionine = 4-amino-2-methyl-5-(phosphooxymethyl)pyrimidine + CO + 5'-deoxyadenosine + formate + L-methionine + 3 H(+). It participates in cofactor biosynthesis; thiamine diphosphate biosynthesis. In terms of biological role, catalyzes the synthesis of the hydroxymethylpyrimidine phosphate (HMP-P) moiety of thiamine from aminoimidazole ribotide (AIR) in a radical S-adenosyl-L-methionine (SAM)-dependent reaction. The chain is Phosphomethylpyrimidine synthase from Pseudomonas aeruginosa (strain UCBPP-PA14).